The following is a 589-amino-acid chain: MPQSRTHSRTATKHIFVSGGVASSLGKGLTASSLGQLLTARGMRVTMQKLDPYLNVDPGTMNPFQHGEVFVTEDGAETDLDVGHYERFLDRDLSGQANVTTGQVYSTVIAKERRGEYLGDTVQVIPHITDEIKSRILAMSGPDLQGHRPDVVITEIGGTVGDIESQPFLEAARQVRHDVGRDNVFFLHVSLVPYLAPSGELKTKPTQHSVAALRNIGIQPDALILRCDREVPPALKNKIALMCDVDVDGCISTPDAPSIYDIPKVLHSEGLDAYVVRQLGLPFRDVDWTVWGNLLERVHQPRETVRIALVGKYVDLPDAYLSVTEALRAGGFANRSKVEISWVPSDACETEAGAQAALGDVDGVLIPGGFGIRGIEGKLGAIRYARHRKTPLLGLCLGLQCVVIEAARSVGLDDANSAEFEPETTHPVISTMADQEDVIAGEADLGGTMRLGAYPAVLAKGSVVARAYGSEEVSERHRHRYEVNNAYRDRIAKSGLRFSGTSPDGHLVEFVEYPADQHPFFVATQAHPELKSRPTRPHPLFAAFVDAALRHKLEERLPVDVHGEERAAADDEIAESADRDEVASVDSAG.

The tract at residues 1 to 281 (MPQSRTHSRT…DAYVVRQLGL (281 aa)) is amidoligase domain. Serine 23 lines the CTP pocket. Residue serine 23 participates in UTP binding. Residues 24-29 (SLGKGL) and aspartate 81 each bind ATP. The Mg(2+) site is built by aspartate 81 and glutamate 155. CTP is bound by residues 162–164 (DIE), 202–207 (KTKPTQ), and lysine 238. Residues 202–207 (KTKPTQ) and lysine 238 each bind UTP. Residues 306 to 554 (RIALVGKYVD…VDAALRHKLE (249 aa)) form the Glutamine amidotransferase type-1 domain. Glycine 369 is a binding site for L-glutamine. Cysteine 396 serves as the catalytic Nucleophile; for glutamine hydrolysis. L-glutamine contacts are provided by residues 397–400 (LGLQ), glutamate 419, and arginine 480. Catalysis depends on residues histidine 527 and glutamate 529. A disordered region spans residues 562–589 (HGEERAAADDEIAESADRDEVASVDSAG).

It belongs to the CTP synthase family. As to quaternary structure, homotetramer.

It carries out the reaction UTP + L-glutamine + ATP + H2O = CTP + L-glutamate + ADP + phosphate + 2 H(+). The catalysed reaction is L-glutamine + H2O = L-glutamate + NH4(+). It catalyses the reaction UTP + NH4(+) + ATP = CTP + ADP + phosphate + 2 H(+). It participates in pyrimidine metabolism; CTP biosynthesis via de novo pathway; CTP from UDP: step 2/2. Its activity is regulated as follows. Allosterically activated by GTP, when glutamine is the substrate; GTP has no effect on the reaction when ammonia is the substrate. The allosteric effector GTP functions by stabilizing the protein conformation that binds the tetrahedral intermediate(s) formed during glutamine hydrolysis. Inhibited by the product CTP, via allosteric rather than competitive inhibition. Catalyzes the ATP-dependent amination of UTP to CTP with either L-glutamine or ammonia as the source of nitrogen. Regulates intracellular CTP levels through interactions with the four ribonucleotide triphosphates. The chain is CTP synthase from Rhodococcus opacus (strain B4).